Reading from the N-terminus, the 271-residue chain is tRNA (guanine-N(7)-)-methyltransferase (271 aa).

S-adenosyl-L-methionine is bound by residues E95, E120, D147, and D175. D175 is an active-site residue. Residues K179, D211, and 249–252 each bind substrate; that span reads THFE.

Belongs to the class I-like SAM-binding methyltransferase superfamily. TrmB family.

It catalyses the reaction guanosine(46) in tRNA + S-adenosyl-L-methionine = N(7)-methylguanosine(46) in tRNA + S-adenosyl-L-homocysteine. Its pathway is tRNA modification; N(7)-methylguanine-tRNA biosynthesis. Functionally, catalyzes the formation of N(7)-methylguanine at position 46 (m7G46) in tRNA. The protein is tRNA (guanine-N(7)-)-methyltransferase of Rhodopirellula baltica (strain DSM 10527 / NCIMB 13988 / SH1).